The sequence spans 432 residues: Small ribosomal subunit protein uS5m (432 aa).

The segment at 110–130 is disordered; the sequence is AGARKGRGKRTKKKKRKDLNR. The span at 113-127 shows a compositional bias: basic residues; sequence RKGRGKRTKKKKRKD. The region spanning 220-284 is the S5 DRBM domain; sequence FDTRILEVRN…NRAIHYLHYI (65 aa).

It belongs to the universal ribosomal protein uS5 family. Component of the mitochondrial ribosome small subunit (28S) which comprises a 12S rRNA and about 30 distinct proteins.

It is found in the mitochondrion. This Mus musculus (Mouse) protein is Small ribosomal subunit protein uS5m (Mrps5).